The following is a 430-amino-acid chain: Serine--tRNA ligase (430 aa).

237–239 (TAE) provides a ligand contact to L-serine. Residue 268–270 (RAE) coordinates ATP. Residue Glu-291 coordinates L-serine. 355 to 358 (EVSS) lines the ATP pocket. Position 391 (Ser-391) interacts with L-serine.

This sequence belongs to the class-II aminoacyl-tRNA synthetase family. Type-1 seryl-tRNA synthetase subfamily. As to quaternary structure, homodimer. The tRNA molecule binds across the dimer.

Its subcellular location is the cytoplasm. It catalyses the reaction tRNA(Ser) + L-serine + ATP = L-seryl-tRNA(Ser) + AMP + diphosphate + H(+). The enzyme catalyses tRNA(Sec) + L-serine + ATP = L-seryl-tRNA(Sec) + AMP + diphosphate + H(+). Its pathway is aminoacyl-tRNA biosynthesis; selenocysteinyl-tRNA(Sec) biosynthesis; L-seryl-tRNA(Sec) from L-serine and tRNA(Sec): step 1/1. Its function is as follows. Catalyzes the attachment of serine to tRNA(Ser). Is also able to aminoacylate tRNA(Sec) with serine, to form the misacylated tRNA L-seryl-tRNA(Sec), which will be further converted into selenocysteinyl-tRNA(Sec). The protein is Serine--tRNA ligase of Baumannia cicadellinicola subsp. Homalodisca coagulata.